A 290-amino-acid polypeptide reads, in one-letter code: Triplex capsid protein 1 (290 aa).

Belongs to the herpesviridae TRX1 protein family. As to quaternary structure, interacts with TRX2, MCP and capsid vertex component 2/CVC2.

The protein localises to the virion. The protein resides in the host nucleus. Functionally, structural component of the T=16 icosahedral capsid. The capsid is composed of pentamers and hexamers of major capsid protein/MCP, which are linked together by heterotrimers called triplexes. These triplexes are formed by a single molecule of triplex protein 1/TRX1 and two copies of triplex protein 2/TRX2. Additionally, TRX1 is required for efficient transport of TRX2 to the nucleus, which is the site of capsid assembly. This is Triplex capsid protein 1 from Human cytomegalovirus (strain AD169) (HHV-5).